Here is a 246-residue protein sequence, read N- to C-terminus: MIILSGQPVTNEQLASFQLEGQKRIILMQLQASNDTFRYRQASDLLFEVTLRSNIMNAARDLNKSGASFAIFQRSRANDAFWRVSEAGALELRYQVEPSRGIKDIFENGSQYAFECATAIVIVFYMGVLQTVGDEKFNRRLRSLTLYDWHYDTLSIYTERGNDFIYGDCLYFENPEFSYQQSQWRGENVIYLGEDQYYGHGLGILTAAEIIDKLNKRRRPGAVQSAYLLPQTTRMDVIYLRQMFGS.

Belongs to the bacillus TGase family.

The catalysed reaction is L-glutaminyl-[protein] + L-lysyl-[protein] = [protein]-L-lysyl-N(6)-5-L-glutamyl-[protein] + NH4(+). In terms of biological role, probably plays a role in the assembly of the spore coat proteins by catalyzing epsilon-(gamma-glutamyl)lysine cross-links. The protein is Protein-glutamine gamma-glutamyltransferase of Bacillus pumilus (strain SAFR-032).